An 820-amino-acid chain; its full sequence is Leucine--tRNA ligase (820 aa).

Positions 42 to 52 (PYPSGDLHMGH) match the 'HIGH' region motif. The 'KMSKS' region signature appears at 576-580 (KMSKS). Lys-579 is a binding site for ATP.

The protein belongs to the class-I aminoacyl-tRNA synthetase family.

The protein resides in the cytoplasm. It carries out the reaction tRNA(Leu) + L-leucine + ATP = L-leucyl-tRNA(Leu) + AMP + diphosphate. The chain is Leucine--tRNA ligase from Coxiella burnetii (strain RSA 331 / Henzerling II).